The sequence spans 424 residues: Gamma-glutamyl phosphate reductase (424 aa).

The protein belongs to the gamma-glutamyl phosphate reductase family.

The protein resides in the cytoplasm. The enzyme catalyses L-glutamate 5-semialdehyde + phosphate + NADP(+) = L-glutamyl 5-phosphate + NADPH + H(+). It functions in the pathway amino-acid biosynthesis; L-proline biosynthesis; L-glutamate 5-semialdehyde from L-glutamate: step 2/2. Its function is as follows. Catalyzes the NADPH-dependent reduction of L-glutamate 5-phosphate into L-glutamate 5-semialdehyde and phosphate. The product spontaneously undergoes cyclization to form 1-pyrroline-5-carboxylate. The polypeptide is Gamma-glutamyl phosphate reductase (Shewanella woodyi (strain ATCC 51908 / MS32)).